Here is a 363-residue protein sequence, read N- to C-terminus: MKASIVAKLEVLVERYEEVQALLGDPGTISDQNKYRELTKEYAQLEVVVLSFKKYQSAQNDLAVAEMMSDDDDPDMREMAKEEIKEAKKTVEKLAADLQILLLPKDPNDDRNCYLEIRAGAGGDEAAIFAGNLFRMYSKYAESKGWRVEVMNSNASEQGGYKELIAKIDGEGAYGIMKFESGGHRVQRVPETESQGRIHTSACTVVVMPEVPEAEAISINPADLKVDTFRASGAGGQHVNKTDSAVRLTHLPTGTVVECQDQRSQHKNRAQAMSVLQSRLQQAEDEKSHAEEQTIRRSLVASGDRSERIRTYNYPQGRVSDHRINLTVYRLNEVLEGDLNALHEPILLEDQADKLAALSQAEF.

Gln-237 carries the post-translational modification N5-methylglutamine. A disordered region spans residues 281 to 302; sequence QQAEDEKSHAEEQTIRRSLVAS. Basic and acidic residues predominate over residues 282 to 295; sequence QAEDEKSHAEEQTI.

Belongs to the prokaryotic/mitochondrial release factor family. Post-translationally, methylated by PrmC. Methylation increases the termination efficiency of RF1.

The protein localises to the cytoplasm. Peptide chain release factor 1 directs the termination of translation in response to the peptide chain termination codons UAG and UAA. In Psychromonas ingrahamii (strain DSM 17664 / CCUG 51855 / 37), this protein is Peptide chain release factor 1.